The following is a 1104-amino-acid chain: MIQEEKEQYSSKSLEAGVDELWRASDAYALTRKKRLGSKRFFFVDGPPYTTGRIHLGTAWNKIIKDSVLRYRSMNGYDLIDRPGWDMHGLPIEVKVESILGFKTKKDIEEFGVARFTEECKKFAIGNMHEMTSQFKKLGVWMNWDDPYMTLKNEYIEAAWWTIKQAHEKHLLERGLRNVNWCPRCETAIADSEVEYADRKDDSIYVKFPLKNEEGFLVIWTTTPWTIPANMAVAANKDFTYAMVYALPAAVLEEAAMQAGLDHTTLVEHHSDGRPKPMRYSDKVAKMKEAIGEEKVKELYEKHGEKLIIARDLVDGVLKMGRYADYQVLKTMTGEELKGTEYVHPLADLIPCQKETEHKVYLADFVVGENTGMVHIAPGHGFDDFELGLKEGIRAYCPVKANGHYDDSVGAYAGMEIREANPKIMEDLRQRNLLLGATTIEHRYGHCWRCKTPIIFLTTDQWFIAVSKMKEDMLAEVKRVNWYPDWAGSARFYDWVNGARDWCVSRQRYWGIPIPIWKCEKCGSLDVIGTKEELERKVGREVPDLHRPFVDEVRLECECGGSMRRVEDIFDVWFDSAVASWATLHFPGRKDLMDWWPADFIVEGHDQTRGWFYSQLGAGMVGFGKAPYNGVCMHGFTLDETGKKMSKSLGNVVAPEDVVEKLGADTLRLYVLSQNAPWEDLSFSWEECGNINRAINIFWNVYRFPLPYMVLDKFDPAKVTLESVKGSLRVEDRWILSKLQAVIKDVDTYMATYELHRATRSIISFILEDLSRWYVQLARERTWVEADDPDKLAAYRVLYDTLVTTVKLIAPFTPYIAERMYQNLVRNVSAEAPVSVHMCDWPVVDSSLLDEQLNRDMDIARKIVEASSNARQKAKRKLRWPVQKIVVAAENPDVVTAVKDLSGVIGEQTNSKEVVVLAPGEANTELGVEVVPNPKLIGPIFKAVAGKVTAALKEADGRAVKKAIEEEKKYIVEIPEGSFDILLDMVSFRDVIPESLAMADFPGGKVYVDVTLSKELEAEGYTRELIRRIQDMRKEMNLNVEDRIKVEVYVGDEKVLDLVKSMKDYAAGEVRADTLDLKTEKPAAGFVKDWDVEGIPMTIGLEKI.

The 'HIGH' region motif lies at 48–58; that stretch reads PYTTGRIHLGT. A 'KMSKS' region motif is present at residues 644–648; it reads KMSKS. Lys-647 contributes to the ATP binding site.

This sequence belongs to the class-I aminoacyl-tRNA synthetase family. IleS type 2 subfamily. As to quaternary structure, monomer. Zn(2+) is required as a cofactor.

The protein resides in the cytoplasm. It catalyses the reaction tRNA(Ile) + L-isoleucine + ATP = L-isoleucyl-tRNA(Ile) + AMP + diphosphate. Functionally, catalyzes the attachment of isoleucine to tRNA(Ile). As IleRS can inadvertently accommodate and process structurally similar amino acids such as valine, to avoid such errors it has two additional distinct tRNA(Ile)-dependent editing activities. One activity is designated as 'pretransfer' editing and involves the hydrolysis of activated Val-AMP. The other activity is designated 'posttransfer' editing and involves deacylation of mischarged Val-tRNA(Ile). This Methanocella arvoryzae (strain DSM 22066 / NBRC 105507 / MRE50) protein is Isoleucine--tRNA ligase.